Consider the following 200-residue polypeptide: Bombinin-like peptides 3 (200 aa).

The segment at residues 1 to 16 (MNFKYIVAVSILIASA) is a signal peptide (or 18). 2 positions are modified to phenylalanine amide: Phe-68 and Phe-129.

This sequence belongs to the bombinin family. As to expression, expressed by the skin glands.

It localises to the secreted. Has antimicrobial activity, but no hemolytic activity. Preference on killing Gram-negative non-enteric bacteria. The sequence is that of Bombinin-like peptides 3 from Bombina orientalis (Oriental fire-bellied toad).